The chain runs to 334 residues: CRISPR-associated endonuclease Cas1 (334 aa).

Mn(2+) contacts are provided by glutamate 161, histidine 226, and glutamate 241.

It belongs to the CRISPR-associated endonuclease Cas1 family. Homodimer, forms a heterotetramer with a Cas2 homodimer. It depends on Mg(2+) as a cofactor. Mn(2+) is required as a cofactor.

Its function is as follows. CRISPR (clustered regularly interspaced short palindromic repeat), is an adaptive immune system that provides protection against mobile genetic elements (viruses, transposable elements and conjugative plasmids). CRISPR clusters contain spacers, sequences complementary to antecedent mobile elements, and target invading nucleic acids. CRISPR clusters are transcribed and processed into CRISPR RNA (crRNA). Acts as a dsDNA endonuclease. Involved in the integration of spacer DNA into the CRISPR cassette. In Methanothermobacter thermautotrophicus (strain ATCC 29096 / DSM 1053 / JCM 10044 / NBRC 100330 / Delta H) (Methanobacterium thermoautotrophicum), this protein is CRISPR-associated endonuclease Cas1.